Here is a 590-residue protein sequence, read N- to C-terminus: Putative ABC transporter ATP-binding protein MM_3016 (590 aa).

ABC transporter domains lie at 11-251 and 317-550; these read VRFE…KLGI and VRIE…AGLI. ATP is bound by residues 45-52 and 350-357; these read GPSGCGKS and GHNGAGKT.

The protein belongs to the ABC transporter superfamily.

Its subcellular location is the cell membrane. Functionally, probably part of an ABC transporter complex. Responsible for energy coupling to the transport system. The sequence is that of Putative ABC transporter ATP-binding protein MM_3016 from Methanosarcina mazei (strain ATCC BAA-159 / DSM 3647 / Goe1 / Go1 / JCM 11833 / OCM 88) (Methanosarcina frisia).